The following is a 459-amino-acid chain: Serine protease HTRA3 (459 aa).

The first 23 residues, 1 to 23, serve as a signal peptide directing secretion; that stretch reads MQARALLPATLATLATLAVSVLA. The region spanning 27–90 is the IGFBP N-terminal domain; that stretch reads PAAPCPARCD…ECVRGVCRCR (64 aa). 8 cysteine pairs are disulfide-bonded: Cys-31–Cys-54, Cys-35–Cys-56, Cys-40–Cys-57, Cys-45–Cys-60, Cys-68–Cys-82, Cys-76–Cys-87, Cys-89–Cys-107, and Cys-96–Cys-132. In terms of domain architecture, Kazal-like spans 76–134; that stretch reads CGDSLECVRGVCRCRWTHTVCGTDGHTYADVCALQAASRRALQISGTPVRQLQKGACPS. A serine protease region spans residues 181–346; that stretch reads GSGFIMSEAG…AIPSDRITRF (166 aa). Active-site charge relay system residues include His-197, Asp-233, and Ser-311. One can recognise a PDZ domain in the interval 365–450; sequence IRMRTITPSL…EVRRGNDDLL (86 aa).

The protein belongs to the peptidase S1C family. As to quaternary structure, homotrimer. Interacts with TGFB1; the interaction inhibits TGFB-mediated signaling. Interacts with BMP4; the interaction inhibits BMP4-mediated signaling. Interacts with TGFB2, GDF5 and MYH9. In terms of tissue distribution, expressed in the ovary, essentially in granulosa cells in a follicle-stage specific manner. Highest levels found in large luteinizing granulosa cells.

The protein resides in the secreted. Serine protease that cleaves beta-casein/CSN2 as well as several extracellular matrix (ECM) proteoglycans such as decorin/DCN, biglycan/BGN and fibronectin/FN1. Inhibits signaling mediated by TGF-beta family proteins possibly indirectly by degradation of these ECM proteoglycans. May act as a tumor suppressor. Negatively regulates, in vitro, trophoblast invasion during placental development and may be involved in the development of the placenta in vivo. May also have a role in ovarian development, granulosa cell differentiation and luteinization. This Rattus norvegicus (Rat) protein is Serine protease HTRA3 (Htra3).